A 67-amino-acid polypeptide reads, in one-letter code: Large ribosomal subunit protein eL38 (67 aa).

Belongs to the eukaryotic ribosomal protein eL38 family.

The sequence is that of Large ribosomal subunit protein eL38 (rpl38e) from Aeropyrum pernix (strain ATCC 700893 / DSM 11879 / JCM 9820 / NBRC 100138 / K1).